We begin with the raw amino-acid sequence, 353 residues long: MTIALGRFTKDEKDLFDTMDDWLRRDRFVFVGWSGLLLFPCAYFALGGWFTGTTFVTSWYTHGLASSYLEGCNFLTAAVSTPANSLAHSLLLLWGPEAQGDFTRWCQLGGLWTFVALHGAFGLIGFMLRQFELARSVQLRPYNAIAFSGPIAVFVSVFLIYPLGQSGWFFAPSFGVAAIFRFILFFQGFHNWTLNPFHMMGVAGVLGAALLCAIHGATVENTLFEDGDGANTFRAFNPTQAEETYSMVTANRFWSQIFGVAFSNKRWLHFFMLFVPVTGLWMSALGVVGLALNLRAYDFVSQEIRAAEDPEFETFYTKNILLNEGIRAWMAAQDQPHENLIFPEEVLPRGNAL.

At threonine 2 the chain carries N-acetylthreonine. Threonine 2 is subject to Phosphothreonine. A helical membrane pass occupies residues 41–61 (CAYFALGGWFTGTTFVTSWYT). Chlorophyll a is bound at residue histidine 118. Residues 125–141 (GFMLRQFELARSVQLRP) form a helical membrane-spanning segment. Residues glutamine 130 and asparagine 143 each contribute to the pheophytin a site. A helical transmembrane segment spans residues 153–166 (VFVSVFLIYPLGQS). Histidine 198 is a chlorophyll a binding site. Residues 208-228 (AALLCAIHGATVENTLFEDGD) form a helical membrane-spanning segment. The a plastoquinone site is built by histidine 215 and phenylalanine 262. Fe cation is bound at residue histidine 215. Histidine 269 provides a ligand contact to Fe cation. The helical transmembrane segment at 279 to 295 (GLWMSALGVVGLALNLR) threads the bilayer.

This sequence belongs to the reaction center PufL/M/PsbA/D family. PSII is composed of 1 copy each of membrane proteins PsbA, PsbB, PsbC, PsbD, PsbE, PsbF, PsbH, PsbI, PsbJ, PsbK, PsbL, PsbM, PsbT, PsbX, PsbY, PsbZ, Psb30/Ycf12, at least 3 peripheral proteins of the oxygen-evolving complex and a large number of cofactors. It forms dimeric complexes. It depends on The D1/D2 heterodimer binds P680, chlorophylls that are the primary electron donor of PSII, and subsequent electron acceptors. It shares a non-heme iron and each subunit binds pheophytin, quinone, additional chlorophylls, carotenoids and lipids. There is also a Cl(-1) ion associated with D1 and D2, which is required for oxygen evolution. The PSII complex binds additional chlorophylls, carotenoids and specific lipids. as a cofactor.

It localises to the plastid. Its subcellular location is the chloroplast thylakoid membrane. It carries out the reaction 2 a plastoquinone + 4 hnu + 2 H2O = 2 a plastoquinol + O2. Photosystem II (PSII) is a light-driven water:plastoquinone oxidoreductase that uses light energy to abstract electrons from H(2)O, generating O(2) and a proton gradient subsequently used for ATP formation. It consists of a core antenna complex that captures photons, and an electron transfer chain that converts photonic excitation into a charge separation. The D1/D2 (PsbA/PsbD) reaction center heterodimer binds P680, the primary electron donor of PSII as well as several subsequent electron acceptors. D2 is needed for assembly of a stable PSII complex. The chain is Photosystem II D2 protein from Ranunculus macranthus (Large buttercup).